Here is a 249-residue protein sequence, read N- to C-terminus: 5'-nucleotidase SurE (249 aa).

A divalent metal cation contacts are provided by aspartate 8, aspartate 9, serine 39, and asparagine 91.

It belongs to the SurE nucleotidase family. The cofactor is a divalent metal cation.

The protein resides in the cytoplasm. The enzyme catalyses a ribonucleoside 5'-phosphate + H2O = a ribonucleoside + phosphate. Functionally, nucleotidase that shows phosphatase activity on nucleoside 5'-monophosphates. The sequence is that of 5'-nucleotidase SurE from Azotobacter vinelandii (strain DJ / ATCC BAA-1303).